Consider the following 542-residue polypeptide: Apolipoprotein N-acyltransferase (542 aa).

6 helical membrane passes run 26–46, 54–74, 89–109, 113–133, 163–183, and 187–207; these read ASVICCMCGYGLLWRGLLSLV, IWCLAFFWTWSVEGFHFSWML, LLISYLAVTFASFSCLVVLCF, YWGALFWLPGVWVAIESVRYY, WAGQSFVVIATNLGCCSVLVF, and FSYGLWLVCCAFPYFLGGTYY. One can recognise a CN hydrolase domain in the interval 220–499; the sequence is LRVAIVQPGY…PDVLQVSVPV (280 aa). The Proton acceptor role is filled by Glu264. Lys349 is an active-site residue. Cys404 serves as the catalytic Nucleophile. Residues 509–529 traverse the membrane as a helical segment; the sequence is FGDAPLLFVAVSSVLGVVGYF.

Belongs to the CN hydrolase family. Apolipoprotein N-acyltransferase subfamily.

Its subcellular location is the cell inner membrane. It catalyses the reaction N-terminal S-1,2-diacyl-sn-glyceryl-L-cysteinyl-[lipoprotein] + a glycerophospholipid = N-acyl-S-1,2-diacyl-sn-glyceryl-L-cysteinyl-[lipoprotein] + a 2-acyl-sn-glycero-3-phospholipid + H(+). It participates in protein modification; lipoprotein biosynthesis (N-acyl transfer). Its function is as follows. Catalyzes the phospholipid dependent N-acylation of the N-terminal cysteine of apolipoprotein, the last step in lipoprotein maturation. The sequence is that of Apolipoprotein N-acyltransferase from Chlamydia muridarum (strain MoPn / Nigg).